The chain runs to 403 residues: Phosphopentomutase (403 aa).

Residues Asp13, Asp298, His303, Asp339, His340, and His351 each coordinate Mn(2+).

This sequence belongs to the phosphopentomutase family. It depends on Mn(2+) as a cofactor.

It is found in the cytoplasm. The enzyme catalyses 2-deoxy-alpha-D-ribose 1-phosphate = 2-deoxy-D-ribose 5-phosphate. It catalyses the reaction alpha-D-ribose 1-phosphate = D-ribose 5-phosphate. Its pathway is carbohydrate degradation; 2-deoxy-D-ribose 1-phosphate degradation; D-glyceraldehyde 3-phosphate and acetaldehyde from 2-deoxy-alpha-D-ribose 1-phosphate: step 1/2. Functionally, isomerase that catalyzes the conversion of deoxy-ribose 1-phosphate (dRib-1-P) and ribose 1-phosphate (Rib-1-P) to deoxy-ribose 5-phosphate (dRib-5-P) and ribose 5-phosphate (Rib-5-P), respectively. The sequence is that of Phosphopentomutase from Streptococcus pyogenes serotype M28 (strain MGAS6180).